The chain runs to 189 residues: MDRLKKSLLEAPIIEKEGYHYFVHPISDGVPMLRPELLREIVIKIIRKAELDDVDKIVTPAAMGIHISTAVSLMTDIPLVVVRKRQYGLDGEVSLSQVTGYSESEMYVNDVYEGDQVLVLDDVLSTGGTLAGLTGALEDIGADIRDIVCVIKKADGTNKLDEAGYDAKTLINVQVIDGEVTIVDEHGDD.

Belongs to the purine/pyrimidine phosphoribosyltransferase family. Archaeal HPRT subfamily.

In terms of biological role, may catalyze a purine salvage reaction, the substrate is unknown. This is HGPRTase-like protein 2 from Haloarcula marismortui (strain ATCC 43049 / DSM 3752 / JCM 8966 / VKM B-1809) (Halobacterium marismortui).